Reading from the N-terminus, the 488-residue chain is GTPase Der (488 aa).

In terms of domain architecture, EngA-type G 1 spans 3–166; the sequence is PVVALVGRPN…YALAPYAEAL (164 aa). Residues 9-16, 56-60, and 118-121 each bind GTP; these read GRPNVGKS, DTGGI, and NKVD. The disordered stretch occupies residues 168-191; it reads LNRDGDEDEDEEEREYSEEEAEAE. Residues 172–189 are compositionally biased toward acidic residues; that stretch reads GDEDEDEEEREYSEEEAE. The EngA-type G 2 domain maps to 200-373; that stretch reads IKMAIIGKPN…SVQEAYDSAT (174 aa). GTP contacts are provided by residues 206–213, 253–257, and 318–321; these read GKPNVGKS, DTAGV, and NKWD. A KH-like domain is found at 374 to 458; the sequence is RRVSTSMLTR…PIQIRFQDSA (85 aa).

Belongs to the TRAFAC class TrmE-Era-EngA-EngB-Septin-like GTPase superfamily. EngA (Der) GTPase family. As to quaternary structure, associates with the 50S ribosomal subunit.

Its function is as follows. GTPase that plays an essential role in the late steps of ribosome biogenesis. This chain is GTPase Der, found in Shewanella sediminis (strain HAW-EB3).